A 255-amino-acid polypeptide reads, in one-letter code: MSIRVIIAGFKGKMGQAACQMVLTDSDLDLVAVLDPFESESEWQGIPVFKDKADLAGFEADVWVDFTTPAVAYENTRFALENGFAPVVGTTGFTSEEIAELKEFSRAQDLGGLIAPNFALGAVLLMQFATQAAKYFPNVEIIELHHDKKKDAPSGTAIKTAELMAEVRESIQQGAADEEELIAGARGADFDGMRIHSVRLPGLVAHQEVIFGNQGEGLTLRHDSYDRISFMTGVNLGIKEVVKRHELVYGLEHLL.

Residues 9–14 (GFKGKM), aspartate 35, 89–91 (GTT), and 115–118 (APNF) each bind NAD(+). Histidine 145 functions as the Proton donor/acceptor in the catalytic mechanism. Residue histidine 146 participates in (S)-2,3,4,5-tetrahydrodipicolinate binding. The active-site Proton donor is lysine 149. Residue 155–156 (GT) coordinates (S)-2,3,4,5-tetrahydrodipicolinate.

It belongs to the DapB family.

The protein localises to the cytoplasm. The enzyme catalyses (S)-2,3,4,5-tetrahydrodipicolinate + NAD(+) + H2O = (2S,4S)-4-hydroxy-2,3,4,5-tetrahydrodipicolinate + NADH + H(+). The catalysed reaction is (S)-2,3,4,5-tetrahydrodipicolinate + NADP(+) + H2O = (2S,4S)-4-hydroxy-2,3,4,5-tetrahydrodipicolinate + NADPH + H(+). The protein operates within amino-acid biosynthesis; L-lysine biosynthesis via DAP pathway; (S)-tetrahydrodipicolinate from L-aspartate: step 4/4. Catalyzes the conversion of 4-hydroxy-tetrahydrodipicolinate (HTPA) to tetrahydrodipicolinate. This chain is 4-hydroxy-tetrahydrodipicolinate reductase, found in Streptococcus pneumoniae (strain 70585).